A 1031-amino-acid polypeptide reads, in one-letter code: GTPase-activating protein DDB_G0291510 (1031 aa).

The segment at 18–48 is disordered; sequence VEKGDIDENNSGSINNRPLSPTLFSSNSSNN. The segment covering 26–41 has biased composition (polar residues); the sequence is NNSGSINNRPLSPTLF. The Rap-GAP domain occupies 186-404; it reads FKDLEQTQTE…RTFKDQLESI (219 aa). A CNH domain is found at 471–881; that stretch reads NEKINCLDVV…LSNDDCNLDN (411 aa). Residues 920-950 form a disordered region; it reads NNNYNNNGNNSNGGNNNNNNNNNNGCNNSLI.

This Dictyostelium discoideum (Social amoeba) protein is GTPase-activating protein DDB_G0291510.